The primary structure comprises 161 residues: Glycine cleavage system H protein 2 (161 aa).

The Lipoyl-binding domain maps to 34–116; the sequence is TVTVGVTDIG…YGEGWIAKLK (83 aa). N6-lipoyllysine is present on Lys75.

This sequence belongs to the GcvH family. The glycine cleavage system is composed of four proteins: P, T, L and H. It depends on (R)-lipoate as a cofactor.

The glycine cleavage system catalyzes the degradation of glycine. The H protein shuttles the methylamine group of glycine from the P protein to the T protein. The polypeptide is Glycine cleavage system H protein 2 (Aquifex aeolicus (strain VF5)).